The chain runs to 844 residues: Protein translocase subunit SecA (844 aa).

Residues Gln87, 105 to 109, and Asp495 contribute to the ATP site; that span reads GEGKT. The segment covering 783–800 has biased composition (basic and acidic residues); that stretch reads QAPPEELKQEFKHKEEPK. Residues 783 to 844 are disordered; the sequence is QAPPEELKQE…GQKYKKCCGA (62 aa). The span at 802 to 811 shows a compositional bias: polar residues; that stretch reads LNYSGAQKET. Residues 816–826 are compositionally biased toward basic and acidic residues; that stretch reads PERRGEPKVGR. Positions 830, 832, 841, and 842 each coordinate Zn(2+).

This sequence belongs to the SecA family. In terms of assembly, monomer and homodimer. Part of the essential Sec protein translocation apparatus which comprises SecA, SecYEG and auxiliary proteins SecDF-YajC and YidC. It depends on Zn(2+) as a cofactor.

The protein resides in the cell inner membrane. It is found in the cytoplasm. The enzyme catalyses ATP + H2O + cellular proteinSide 1 = ADP + phosphate + cellular proteinSide 2.. Its function is as follows. Part of the Sec protein translocase complex. Interacts with the SecYEG preprotein conducting channel. Has a central role in coupling the hydrolysis of ATP to the transfer of proteins into and across the cell membrane, serving as an ATP-driven molecular motor driving the stepwise translocation of polypeptide chains across the membrane. The sequence is that of Protein translocase subunit SecA from Nitratidesulfovibrio vulgaris (strain DSM 19637 / Miyazaki F) (Desulfovibrio vulgaris).